The chain runs to 192 residues: Adenylate kinase (192 aa).

Position 12–17 (12–17) interacts with ATP; it reads GSGKTT. The tract at residues 34–63 is NMP; it reads STGDLLRAQVASGSELGKTIDSFISKGNLV. Residues threonine 35, arginine 40, 61–63, 88–91, and glutamine 95 contribute to the AMP site; these read NLV and GYPR. Residues 130-136 form an LID region; sequence GRNRGAD. An ATP-binding site is contributed by arginine 131. 2 residues coordinate AMP: arginine 133 and arginine 145. Arginine 173 is an ATP binding site.

The protein belongs to the adenylate kinase family. As to quaternary structure, monomer.

It localises to the cytoplasm. The catalysed reaction is AMP + ATP = 2 ADP. It participates in purine metabolism; AMP biosynthesis via salvage pathway; AMP from ADP: step 1/1. In terms of biological role, catalyzes the reversible transfer of the terminal phosphate group between ATP and AMP. Plays an important role in cellular energy homeostasis and in adenine nucleotide metabolism. This Campylobacter jejuni subsp. doylei (strain ATCC BAA-1458 / RM4099 / 269.97) protein is Adenylate kinase.